A 274-amino-acid polypeptide reads, in one-letter code: Remorin 4.2 (274 aa).

The segment covering 1-30 has biased composition (basic and acidic residues); that stretch reads MLTLYHQERSPDATSNDRDETPETVVREVH. 3 disordered regions span residues 1–71, 117–157, and 218–245; these read MLTL…EGEN, TDHE…TVQR, and AMEKTQNNVAKAQRKAEERRATAEAKRG. Composition is skewed to polar residues over residues 61–71 and 145–156; these read RSATTMSEGEN and GPGQSRVGSTVQ. Residues 204–239 adopt a coiled-coil conformation; the sequence is MKKIERKLEERKAKAMEKTQNNVAKAQRKAEERRAT. A compositionally biased stretch (basic and acidic residues) spans 231–245; the sequence is RKAEERRATAEAKRG.

It belongs to the remorin family. Forms homodimer and heterodimer with REM4.1. Interacts with KIN11. Post-translationally, probably ubiquitinated and degraded by the 26S proteasome pathway. Predominantly detected in bud, stem, root, flower, silique, and leaves, and enhanced dramatically in senescence leaf.

The protein localises to the cell membrane. In terms of biological role, collaborates with REM4.1 to positively regulate the BCTV and BSCTV susceptibility. This is Remorin 4.2 from Arabidopsis thaliana (Mouse-ear cress).